The primary structure comprises 135 residues: UPF0299 membrane protein PC1_1498 (135 aa).

The next 4 membrane-spanning stretches (helical) occupy residues 5–25, 30–50, 63–83, and 93–113; these read FIVCWQYLRAFALIYLCLLAG, ALLPFTIPGSIIGMLVLFTLL, GCHLLIRHMALLFVPIGVGVM, and FGPIVVSCLISTFIVMLVVGF.

It belongs to the UPF0299 family.

Its subcellular location is the cell inner membrane. In Pectobacterium carotovorum subsp. carotovorum (strain PC1), this protein is UPF0299 membrane protein PC1_1498.